A 31-amino-acid chain; its full sequence is Nemertide alpha-7 (31 aa).

Intrachain disulfides connect C2–C16, C9–C20, and C15–C26. 4-hydroxyproline is present on P29.

It belongs to the nemertide family. Confined to the epidermis and to the mucus layer.

Its subcellular location is the secreted. Its function is as follows. Potent toxin, demonstrating strong inhibitory effects on insect sodium channels (Nav) and reduced activity on mammalian sodium channels. Potently inhibits inactivation of insect sodium channels of B.germanica (BgNav1) (EC(50)=9.5 nM). The toxin also delays the inactivation of most mammalian Nav (human Nav1.1/SCN1A; EC(50)=171.5 nM, rat Nav1.2/SCN2A; EC(50)=50.4 nM, rat Nav1.3/SCN3A; EC(50)=170.2 nM, rat Nav1.4/SCN4A; EC(50)=810.6 nM, human Nav1.5/SCN5A; EC(50)=155.6 nM, mouse Nav1.6/SCN8A; EC(50)=147.6 nM, human Nav1.9/SCN9A; EC(50)=129 nM). Inactivation is completely prevented by a concentration of 1 uM, resulting in sustained, non-inactivating currents. In addition, the toxin significantly enhances the recovery from inactivation, and the open state is not required for the toxin to interact with the channel. In vivo, injection into brine shrimp (Artemia salina) stops movement or causes death after 24 hours (EC(50)=6.1 uM). The sequence is that of Nemertide alpha-7 from Lineus ruber (Red bootlace).